Consider the following 198-residue polypeptide: MAQKPKIDPHVGRLGYLQALVTEFQETESQDAKEQVLANLANFAYDPGNYQYLRQLQVLDLFLDSLSEENETLIKFAIGGLCNLCADKANKEHVLQAGGLPLIIGCLSSPDEETVLSAVTTLMYLSSPGSRSHPELTSLPVVQCMLRFSISASTRLRNLAQIFLEDFCSPSQVAEAHSQQAHSALGIPLPKTEAPQQP.

2 ARM repeats span residues 57 to 99 (QVLD…QAGG) and 100 to 140 (LPLI…TSLP). The residue at position 169 (serine 169) is a Phosphoserine.

As to quaternary structure, component of the minor spliceosome. Within this complex, interacts with RBM48.

As a component of the minor spliceosome, involved in the splicing of U12-type introns in pre-mRNAs. This is Armadillo repeat-containing protein 7 (Armc7) from Mus musculus (Mouse).